Reading from the N-terminus, the 113-residue chain is Holo-[acyl-carrier-protein] synthase (113 aa).

Mg(2+)-binding residues include D8 and E57.

The protein belongs to the P-Pant transferase superfamily. AcpS family. It depends on Mg(2+) as a cofactor.

Its subcellular location is the cytoplasm. It catalyses the reaction apo-[ACP] + CoA = holo-[ACP] + adenosine 3',5'-bisphosphate + H(+). In terms of biological role, transfers the 4'-phosphopantetheine moiety from coenzyme A to a Ser of acyl-carrier-protein. This chain is Holo-[acyl-carrier-protein] synthase, found in Thermodesulfovibrio yellowstonii (strain ATCC 51303 / DSM 11347 / YP87).